Here is an 85-residue protein sequence, read N- to C-terminus: Putative membrane protein insertion efficiency factor (85 aa).

Belongs to the UPF0161 family.

It is found in the cell membrane. Functionally, could be involved in insertion of integral membrane proteins into the membrane. Its function is as follows. Lyses fish blood cells. This Aeromonas hydrophila protein is Putative membrane protein insertion efficiency factor (hlyA).